The chain runs to 268 residues: Ubiquinone biosynthesis protein COQ4 homolog, mitochondrial (268 aa).

The Zn(2+) site is built by histidine 171, aspartate 172, histidine 175, and glutamate 187.

The protein belongs to the COQ4 family. As to quaternary structure, component of a multi-subunit COQ enzyme complex. Zn(2+) serves as cofactor.

It localises to the mitochondrion inner membrane. It catalyses the reaction a 4-hydroxy-3-methoxy-5-(all-trans-polyprenyl)benzoate + H(+) = a 2-methoxy-6-(all-trans-polyprenyl)phenol + CO2. It functions in the pathway cofactor biosynthesis; ubiquinone biosynthesis. In terms of biological role, lyase that catalyzes the C1-decarboxylation of 4-hydroxy-3-methoxy-5-(all-trans-polyprenyl)benzoic acid into 2-methoxy-6-(all-trans-polyprenyl)phenol during ubiquinone biosynthesis. The polypeptide is Ubiquinone biosynthesis protein COQ4 homolog, mitochondrial (Drosophila erecta (Fruit fly)).